A 508-amino-acid chain; its full sequence is Photosystem II CP47 reaction center protein (508 aa).

A run of 6 helical transmembrane segments spans residues 21–36 (AVHI…WAGS), 101–115 (IVFS…IWHW), 140–156 (GIHL…FGAF), 203–218 (IAAG…FHLS), 237–252 (VLSS…AFIV), and 457–472 (TFAL…HGAR).

This sequence belongs to the PsbB/PsbC family. PsbB subfamily. In terms of assembly, PSII is composed of 1 copy each of membrane proteins PsbA, PsbB, PsbC, PsbD, PsbE, PsbF, PsbH, PsbI, PsbJ, PsbK, PsbL, PsbM, PsbT, PsbX, PsbY, PsbZ, Psb30/Ycf12, at least 3 peripheral proteins of the oxygen-evolving complex and a large number of cofactors. It forms dimeric complexes. Binds multiple chlorophylls. PSII binds additional chlorophylls, carotenoids and specific lipids. serves as cofactor.

The protein resides in the plastid. It localises to the chloroplast thylakoid membrane. Functionally, one of the components of the core complex of photosystem II (PSII). It binds chlorophyll and helps catalyze the primary light-induced photochemical processes of PSII. PSII is a light-driven water:plastoquinone oxidoreductase, using light energy to abstract electrons from H(2)O, generating O(2) and a proton gradient subsequently used for ATP formation. This is Photosystem II CP47 reaction center protein from Cryptomeria japonica (Japanese cedar).